We begin with the raw amino-acid sequence, 663 residues long: UvrABC system protein B (663 aa).

Residues 1–10 (MIDKRDDKPF) are compositionally biased toward basic and acidic residues. Positions 1 to 23 (MIDKRDDKPFKLKSKYKPSGDQP) are disordered. Residues 31–418 (DNIEGGEKAQ…TNTIIEQIIR (388 aa)) form the Helicase ATP-binding domain. 44 to 51 (GATGTGKT) lines the ATP pocket. Positions 97–120 (YYDYYQPEAYVPSSDTYIEKDSSV) match the Beta-hairpin motif. The 167-residue stretch at 435–601 (QMDDLLGEIN…TIKKDIRGLI (167 aa)) folds into the Helicase C-terminal domain. Residues 627–662 (KEAINALQKQMQEAAELLDFELAAQMRDLILELKLM) enclose the UVR domain.

Belongs to the UvrB family. As to quaternary structure, forms a heterotetramer with UvrA during the search for lesions. Interacts with UvrC in an incision complex.

The protein resides in the cytoplasm. Its function is as follows. The UvrABC repair system catalyzes the recognition and processing of DNA lesions. A damage recognition complex composed of 2 UvrA and 2 UvrB subunits scans DNA for abnormalities. Upon binding of the UvrA(2)B(2) complex to a putative damaged site, the DNA wraps around one UvrB monomer. DNA wrap is dependent on ATP binding by UvrB and probably causes local melting of the DNA helix, facilitating insertion of UvrB beta-hairpin between the DNA strands. Then UvrB probes one DNA strand for the presence of a lesion. If a lesion is found the UvrA subunits dissociate and the UvrB-DNA preincision complex is formed. This complex is subsequently bound by UvrC and the second UvrB is released. If no lesion is found, the DNA wraps around the other UvrB subunit that will check the other stand for damage. This chain is UvrABC system protein B, found in Streptococcus pyogenes serotype M6 (strain ATCC BAA-946 / MGAS10394).